The chain runs to 137 residues: Early nodulin-55-1 (137 aa).

The Phytocyanin domain occupies 1–67 (KYDERTESVH…GLKLMVVVMS (67 aa)). Residues N13, N51, and N68 are each glycosylated (N-linked (GlcNAc...) asparagine). Cysteines 20 and 55 form a disulfide. The tract at residues 70–115 (TKKKLIHSPSPSSPSPSPSPSPSPSPSPSPSLSSPSPSPLPNNQGV) is disordered. Positions 80–98 (PSSPSPSPSPSPSPSPSPS) are enriched in pro residues.

This sequence belongs to the early nodulin-like (ENODL) family.

Its subcellular location is the symbiosome. It is found in the peribacteroid membrane. Its function is as follows. May act as a carbohydrate transporter. The chain is Early nodulin-55-1 from Glycine max (Soybean).